We begin with the raw amino-acid sequence, 540 residues long: Pentatricopeptide repeat-containing protein At3g29290 (540 aa).

PPR repeat units follow at residues 106-140 (NEETLSKRLRKLSRLDKVRSALELFDSMRFLGLQP), 141-175 (NAHACNSFLSCLLRNGDIQKAFTVFEFMRKKENVT), 177-205 (HTYSLMLKAVAEVKGCESALRMFRELERE), 213-247 (DVVLYNTAISLCGRINNVYETERIWRVMKGDGHIG), 248-282 (TEITYSLLVSIFVRCGRSELALDVYDEMVNNKISL), 283-317 (REDAMYAMISACTKEEKWDLALKIFQSMLKKGMKP), 318-352 (NLVACNTLINSLGKAGKVGLVFKVYSVLKSLGHKP), 353-387 (DEYTWNALLTALYKANRYEDVLQLFDMIRSENLCC), 389-423 (NEYLYNTAMVSCQKLGYWEKAVKLLYEMEGSGLTV), 424-458 (STSSYNLVISACEKSRKSKVALLVYEHMAQRDCKP), 459-487 (NTFTYLSLVRSCIWGSLWDEVEDILKKVE), and 489-523 (DVSLYNAAIHGMCLRREFKFAKELYVKMREMGLEP).

Belongs to the PPR family. P subfamily.

The sequence is that of Pentatricopeptide repeat-containing protein At3g29290 (EMB2076) from Arabidopsis thaliana (Mouse-ear cress).